We begin with the raw amino-acid sequence, 332 residues long: ADP-L-glycero-D-manno-heptose-6-epimerase (332 aa).

NADP(+)-binding positions include 13-14 (FI), 34-35 (DN), lysine 41, lysine 56, 78-82 (EGACS), and asparagine 95. Catalysis depends on tyrosine 142, which acts as the Proton acceptor. Residue lysine 146 participates in NADP(+) binding. Residue asparagine 171 coordinates substrate. The NADP(+) site is built by valine 172 and lysine 180. The active-site Proton acceptor is the lysine 180. Residues arginine 182, histidine 189, 203–206 (FEGC), arginine 216, and tyrosine 295 contribute to the substrate site.

The protein belongs to the NAD(P)-dependent epimerase/dehydratase family. HldD subfamily. In terms of assembly, homopentamer. NADP(+) serves as cofactor.

It carries out the reaction ADP-D-glycero-beta-D-manno-heptose = ADP-L-glycero-beta-D-manno-heptose. The protein operates within nucleotide-sugar biosynthesis; ADP-L-glycero-beta-D-manno-heptose biosynthesis; ADP-L-glycero-beta-D-manno-heptose from D-glycero-beta-D-manno-heptose 7-phosphate: step 4/4. Functionally, catalyzes the interconversion between ADP-D-glycero-beta-D-manno-heptose and ADP-L-glycero-beta-D-manno-heptose via an epimerization at carbon 6 of the heptose. The chain is ADP-L-glycero-D-manno-heptose-6-epimerase from Thiobacillus denitrificans (strain ATCC 25259 / T1).